The sequence spans 335 residues: [Citrate [pro-3S]-lyase] ligase (335 aa).

In terms of domain architecture, N-acetyltransferase spans 1-131 (MQFERISTEQ…SATRLQKQCS (131 aa)).

It catalyses the reaction holo-[citrate lyase ACP] + acetate + ATP = acetyl-[citrate lyase ACP] + AMP + diphosphate. Functionally, acetylation of prosthetic group (2-(5''-phosphoribosyl)-3'-dephosphocoenzyme-A) of the gamma subunit of citrate lyase. The chain is [Citrate [pro-3S]-lyase] ligase (citC) from Haemophilus influenzae (strain ATCC 51907 / DSM 11121 / KW20 / Rd).